Here is a 115-residue protein sequence, read N- to C-terminus: U3-lycotoxin-Ls1d (115 aa).

The first 20 residues, 1–20 (MKFVLLFGVLLVTLFSYSSA), serve as a signal peptide directing secretion. The propeptide occupies 21–44 (EMLDDFDQADEDELLSLIEKEEAR). Cystine bridges form between cysteine 48–cysteine 63, cysteine 55–cysteine 72, cysteine 62–cysteine 87, and cysteine 74–cysteine 85.

It belongs to the neurotoxin 19 (CSTX) family. 01 subfamily. In terms of tissue distribution, expressed by the venom gland.

The protein resides in the secreted. The chain is U3-lycotoxin-Ls1d from Lycosa singoriensis (Wolf spider).